Here is an 863-residue protein sequence, read N- to C-terminus: MICAL-like protein 1 (863 aa).

Residues 2-108 (AGPRGALLAW…YVSQYYNHFC (107 aa)) form the Calponin-homology (CH) domain. Disordered stretches follow at residues 119 to 162 (RKGL…TPSS) and 224 to 670 (GTRS…PLIK). A compositionally biased stretch (pro residues) spans 125–135 (CSPPSVAPTPV). 2 stretches are compositionally biased toward low complexity: residues 143–159 (GEELSSGSLSEQGTGQT) and 224–244 (GTRSGTRPGPFSQPKQQHQQQ). An LIM zinc-binding domain is found at 162 to 225 (STCAACQQHV…EHCARLGPGT (64 aa)). Residues Ser295 and Ser309 each carry the phosphoserine modification. Position 318 is a phosphothreonine (Thr318). Polar residues predominate over residues 325–340 (LQQENLVEQAGSSSLV). Residues 384–395 (APLPPSSSPGPP) show a composition bias toward pro residues. Ser391 carries the phosphoserine modification. Residues 425 to 427 (NPF) carry the NPF1 motif. The segment covering 427–438 (FEEEEEDKEEEA) has biased composition (acidic residues). The span at 439–450 (PAAPSLATSPAL) shows a compositional bias: low complexity. Phosphothreonine occurs at positions 467 and 469. Ser470, Ser471, Ser484, and Ser486 each carry phosphoserine. Low complexity-rich tracts occupy residues 482–495 (APSASPLALHASRL), 505–520 (PSPALSVESLSSESAS), and 553–566 (SLSTNSSLASSGEL). Phosphoserine occurs at positions 578 and 621. Residues 633-635 (NPF) carry the NPF2 motif. Over residues 638–656 (KPSPAASPATKKATKGSKP) the composition is skewed to low complexity. Residues 652-863 (KGSKPVRPPA…AKSKSPRDKS (212 aa)) form a mediates the interaction with RAB13 and RAB35 and intramolecular interaction with the CH domain region. One can recognise a bMERB domain in the interval 671-818 (RKVQADQYIP…EEEEDKMLEA (148 aa)). Residues 682-711 (EDIHGEMDTIERRLDALEHRGVLLEEKLRG) are a coiled coil. The interval 700-863 (HRGVLLEEKL…AKSKSPRDKS (164 aa)) is necessary and sufficient to associate with tubular recycling endosome membranes, mediate phosphatidic acid-binding and membrane tubulation. Ser740 bears the Phosphoserine mark. Residues 785–830 (MQELVTLIEQRNAIINCLDEDRQREEEEDKMLEAMIKKKEFQREAE) are a coiled coil.

As to quaternary structure, homooligomer. Interacts (via NPF1 motif) with EHD1 (via EH domain); the interaction is direct and probably recruits EHD1 to membranes. Interacts with EHD3 (via EH domain). Interacts with RAB35 (GTP-bound form); the interaction is direct and probably recruits MICALL1 to membranes. Interacts with ACAP2; the interaction is indirect through RAB35. Interacts with RAB8A (GTP-bound form); regulates RAB8A association with recycling endosomes. Interacts with RAB13 (GTP-bound form). Interacts with ARF6 (GTP-bound form). Interacts with PACSIN2 (via the SH3 domain). Interacts with DPYSL2.

Its subcellular location is the recycling endosome membrane. It localises to the late endosome membrane. It is found in the cell projection. The protein resides in the cilium membrane. The protein localises to the cytoplasm. Its subcellular location is the cytoskeleton. It localises to the microtubule organizing center. It is found in the centrosome. The protein resides in the centriole. In terms of biological role, lipid-binding protein with higher affinity for phosphatidic acid, a lipid enriched in recycling endosome membranes. On endosome membranes, acts as a downstream effector of Rab proteins recruiting cytosolic proteins to regulate membrane tubulation. Involved in a late step of receptor-mediated endocytosis regulating for instance endocytosed-EGF receptor trafficking. Alternatively, regulates slow endocytic recycling of endocytosed proteins back to the plasma membrane. Also involved in cargo protein delivery to the plasma membrane. Plays a role in ciliogenesis coordination, recruits EHD1 to primary cilium where it is anchored to the centriole through interaction with tubulins. May indirectly play a role in neurite outgrowth. The sequence is that of MICAL-like protein 1 (MICALL1) from Homo sapiens (Human).